Here is a 293-residue protein sequence, read N- to C-terminus: N-acetylneuraminate lyase (293 aa).

Aceneuramate-binding residues include serine 48 and serine 49. The active-site Proton donor is tyrosine 137. The active-site Schiff-base intermediate with substrate is lysine 165. Aceneuramate-binding residues include threonine 167, glycine 189, aspartate 191, glutamate 192, and serine 208.

It belongs to the DapA family. NanA subfamily. Homotetramer.

It localises to the cytoplasm. The catalysed reaction is aceneuramate = aldehydo-N-acetyl-D-mannosamine + pyruvate. It functions in the pathway amino-sugar metabolism; N-acetylneuraminate degradation; D-fructose 6-phosphate from N-acetylneuraminate: step 1/5. Functionally, catalyzes the reversible aldol cleavage of N-acetylneuraminic acid (sialic acid; Neu5Ac) to form pyruvate and N-acetylmannosamine (ManNAc) via a Schiff base intermediate. The sequence is that of N-acetylneuraminate lyase from Staphylococcus aureus (strain Mu3 / ATCC 700698).